Reading from the N-terminus, the 433-residue chain is 3-phosphoshikimate 1-carboxyvinyltransferase (433 aa).

3-phosphoshikimate contacts are provided by Lys-22, Ser-23, and Arg-27. Lys-22 is a binding site for phosphoenolpyruvate. Residues Gly-94 and Arg-123 each contribute to the phosphoenolpyruvate site. Positions 168, 170, 319, and 346 each coordinate 3-phosphoshikimate. Gln-170 contributes to the phosphoenolpyruvate binding site. The Proton acceptor role is filled by Asp-319. Positions 350 and 392 each coordinate phosphoenolpyruvate.

This sequence belongs to the EPSP synthase family. Monomer.

The protein localises to the cytoplasm. It catalyses the reaction 3-phosphoshikimate + phosphoenolpyruvate = 5-O-(1-carboxyvinyl)-3-phosphoshikimate + phosphate. The protein operates within metabolic intermediate biosynthesis; chorismate biosynthesis; chorismate from D-erythrose 4-phosphate and phosphoenolpyruvate: step 6/7. Catalyzes the transfer of the enolpyruvyl moiety of phosphoenolpyruvate (PEP) to the 5-hydroxyl of shikimate-3-phosphate (S3P) to produce enolpyruvyl shikimate-3-phosphate and inorganic phosphate. This is 3-phosphoshikimate 1-carboxyvinyltransferase from Roseiflexus sp. (strain RS-1).